We begin with the raw amino-acid sequence, 438 residues long: Aspartate--tRNA(Asp/Asn) ligase (438 aa).

Position 176 (Glu-176) interacts with L-aspartate. Residues 198–201 (QLYK) are aspartate. Position 220 (Arg-220) interacts with L-aspartate. ATP contacts are provided by residues 220 to 222 (RAE), 228 to 230 (RHL), and Glu-361. Mg(2+) contacts are provided by Glu-361 and Ser-364. Positions 364 and 368 each coordinate L-aspartate. Residue 409–412 (GADR) participates in ATP binding.

This sequence belongs to the class-II aminoacyl-tRNA synthetase family. Type 2 subfamily. As to quaternary structure, homodimer. The cofactor is Mg(2+).

It localises to the cytoplasm. It carries out the reaction tRNA(Asx) + L-aspartate + ATP = L-aspartyl-tRNA(Asx) + AMP + diphosphate. Functionally, aspartyl-tRNA synthetase with relaxed tRNA specificity since it is able to aspartylate not only its cognate tRNA(Asp) but also tRNA(Asn). Reaction proceeds in two steps: L-aspartate is first activated by ATP to form Asp-AMP and then transferred to the acceptor end of tRNA(Asp/Asn). The chain is Aspartate--tRNA(Asp/Asn) ligase from Methanocaldococcus jannaschii (strain ATCC 43067 / DSM 2661 / JAL-1 / JCM 10045 / NBRC 100440) (Methanococcus jannaschii).